The sequence spans 493 residues: Cysteine--tRNA ligase (493 aa).

Cysteine 31 is a binding site for Zn(2+). Residues 33–43 carry the 'HIGH' region motif; it reads PTVYGDAHLGH. Residues cysteine 226, histidine 251, and glutamate 255 each coordinate Zn(2+). Residues 283–287 carry the 'KMSKS' region motif; that stretch reads KMGKS. Lysine 286 contacts ATP.

Belongs to the class-I aminoacyl-tRNA synthetase family. In terms of assembly, monomer. Zn(2+) is required as a cofactor.

The protein resides in the cytoplasm. It catalyses the reaction tRNA(Cys) + L-cysteine + ATP = L-cysteinyl-tRNA(Cys) + AMP + diphosphate. This is Cysteine--tRNA ligase from Bacteroides thetaiotaomicron (strain ATCC 29148 / DSM 2079 / JCM 5827 / CCUG 10774 / NCTC 10582 / VPI-5482 / E50).